Consider the following 3855-residue polypeptide: Replicase polyprotein 1ab (3855 aa).

A C4-type; atypical zinc finger spans residues 8-28 (CMCTPAARVFWNAGQVFCTRC). The Peptidase C31 domain maps to 69–180 (ECTPSGCCWL…QPFCPFEEAH (112 aa)). A PCP1-alpha region spans residues 69-182 (ECTPSGCCWL…FCPFEEAHSS (114 aa)). Residues Cys76 and His146 each act as for nsp1-alpha papain-like cysteine proteinase activity in the active site. An important for host EIF2AK2 inhibition region spans residues 203-204 (MM). The segment at 269–384 (PDVFDGKCWL…IFRFGAHKWY (116 aa)) is PCP1-beta. Residues 269–385 (PDVFDGKCWL…FRFGAHKWYG (117 aa)) enclose the Peptidase C32 domain. Catalysis depends on for nsp1-beta papain-like cysteine proteinase activity residues Cys276 and His345. Residues 418–505 (ITTYSPPTDG…GVHWEVEVRS (88 aa)) are OTU-like. Residues 420-527 (TYSPPTDGSC…VGVCSEGCVA (108 aa)) form the Peptidase C33 domain. Residues Cys429 and His498 each act as for nsp2 cysteine proteinase activity in the active site. Disordered stretches follow at residues 752–797 (PSDP…DAGA) and 1047–1088 (PPPK…SRVS). Residues 775–790 (APASTTTLVREQTPDN) show a composition bias toward polar residues. A run of 3 helical transmembrane segments spans residues 1134–1154 (GSMA…LLLC), 1179–1199 (GVFG…SNPV), and 1252–1272 (WHVL…VYVV). Residues 1149–1272 (LALLLCRSYP…DLALSLVYVV (124 aa)) are HD1. Residues 1327 to 1351 (TGWRGCWRGESPIHQPHQKPIAYAN) form a WCCH region. The next 5 membrane-spanning stretches (helical) occupy residues 1468-1488 (LAVA…LWFT), 1521-1541 (LCVS…QLSG), 1543-1563 (EVGI…RMAL), 1573-1593 (AFCA…PILL), and 1609-1629 (FLVF…GLLW). Positions 1468–1629 (LAVAQVSAWT…LSLGITGLLW (162 aa)) are HD2. In terms of domain architecture, Peptidase S32 spans 1694 to 1896 (GAFRTHKPCL…SLLASVPVVE (203 aa)). Active-site charge relay system; for serine protease nsp4 activity residues include His1732, Asp1757, and Ser1810. The next 4 helical transmembrane spans lie at 1919–1939 (WTPI…AVLV), 1943–1963 (FSFA…VLMI), 1977–1997 (LAFY…TFAG), and 2020–2040 (SCVP…LWLF). The tract at residues 1919-2040 (WTPIVAVGFF…HTLGVILWLF (122 aa)) is HD3. In terms of domain architecture, NiRAN spans 2381–2544 (IISQLQGLTT…LPYKLYPVRG (164 aa)). Positions 2783–2917 (GRCLEADLAS…YAERPTFPNY (135 aa)) constitute a RdRp catalytic domain. The AV ZBD domain occupies 3038-3101 (GKKFRHCGIC…SPVGAGRSPL (64 aa)). The Zn(2+) site is built by Cys3044, Cys3047, Cys3057, Cys3062, His3065, His3067, His3069, His3071, Cys3078, His3080, Cys3087, and Cys3090. In terms of domain architecture, (+)RNA virus helicase ATP-binding spans 3151-3310 (DLSDGDYQVV…VFDQMPQKQL (160 aa)). 3186–3193 (GPPGSGKT) provides a ligand contact to ATP. In terms of domain architecture, (+)RNA virus helicase C-terminal spans 3311 to 3440 (TTIYRFGPNI…FSRGDELVVL (130 aa)). The region spanning 3479–3576 (EGSCMPLPQV…LTLYIRGEPQ (98 aa)) is the AV-Nsp11N/CoV-Nsp15M domain. The 123-residue stretch at 3578 to 3700 (LPETLVSTGR…MVWKGATAYF (123 aa)) folds into the NendoU domain. Residues His3609, His3624, and Lys3653 contribute to the active site.

Belongs to the arteriviridae polyprotein family. Nsp1-alpha papain-like: Interacts with host RNF31. As to quaternary structure, interacts with host EIF2AK2; this interaction occurs in host stress granules and leads to EIF2AK2 inhibition. Interacts with host G3BP1; this interaction probably plays a role in Nsp1-beta-mediated inhibition of host EIF2AK2. In terms of assembly, interacts with host DDX18; this interaction redistributes host DDX18 to the cytoplasm. Interacts with host IFITM1. As to quaternary structure, interacts with host DDX5. In terms of assembly, interacts with host OTULIN. Interacts with host LGALS3. Post-translationally, specific enzymatic cleavages in vivo by its own proteases yield mature proteins. Nsp1 is autocleaved into two subunits, Nsp1-alpha and Nsp1-beta. There are two alternative pathways for processing. Either nsp4-5 is cleaved, which represents the major pathway or the nsp5-6 and nsp6-7 are processed, which represents the minor pathway. The major pathway occurs when nsp2 acts as a cofactor for nsp4.

It is found in the host nucleus. Its subcellular location is the host cytoplasm. The protein resides in the host membrane. It localises to the host endoplasmic reticulum. The protein localises to the host perinuclear region. It carries out the reaction RNA(n) + a ribonucleoside 5'-triphosphate = RNA(n+1) + diphosphate. The enzyme catalyses ATP + H2O = ADP + phosphate + H(+). It catalyses the reaction Thiol-dependent hydrolysis of ester, thioester, amide, peptide and isopeptide bonds formed by the C-terminal Gly of ubiquitin (a 76-residue protein attached to proteins as an intracellular targeting signal).. The catalysed reaction is uridylyl-uridylyl-ribonucleotide-RNA = a 3'-end uridylyl-2',3'-cyclophospho-uridine-RNA + a 5'-end dephospho-ribonucleoside-RNA. In terms of biological role, contains the activities necessary for the transcription of negative stranded RNA, leader RNA, subgenomic mRNAs and progeny virion RNA as well as proteinases responsible for the cleavage of the polyprotein into functional products. Its function is as follows. Inhibits host IFN-beta production. Plays a role in the degradation of the host transcriptional activator CREBBP protein. The degradation of host CREBBP which is a key component of the IFN enhanceosome is likely responsible for the inhibition of interferon mediated by Nsp1-alpha. Also participates in the inhibition of host NF-kappa-B activation by counteracting LUBAC-dependent induction of NF-kappa-B. Reduces host NEMO ubiquitination by blocking the interaction between the two LUBAC complex components RNF31 and SHARPIN. Functionally, plays a role in blocking host mRNA nuclear export to the cytoplasm and subversion of host protein synthesis. Additionally, inhibits the interferon-activated JAK/STAT signal transduction by mediating the ubiquitination and subsequent proteasomal degradation of host KPNA1. Repurposes the host antiviral stress granules into a proviral platform to counteract the EIF2AK2/PKR restriction, thereby regulating the host inflammatory response. Multifunctional protein that acts as a viral protease and as a viral antagonist of host immune response. Cleaves the nsp2/nsp3 site in the viral polyprotein. Displays deubiquitinating activity that cleaves both ubiquitinated and ISGylated products and therefore inhibits ubiquitin and ISG15-dependent host innate immunity. Also deubiquinates host NFKBIA, thereby interfering with NFKBIA degradation and impairing subsequent NF-kappa-B activation. In terms of biological role, plays a role in the inhibition of the immune response by interacting with host IFITM1. This interaction leads to the proteasomal degradation of the IFN-induced antiviral protein IFITM1. Its function is as follows. Cleaves the majority of cleavage sites present in the C-terminus of the polyprotein. Triggers host apoptosis through caspase-3, -8, and -9 activations. Subverts host innate immune responses through its protease activity. Targets the NF-kappa-B essential modulator NEMO and mediates its cleavage. Blocks host interferon beta induction and downstream signaling by cleaving mitochondrial MAVS, dislodging it from the mitochondria. Impairs host defense by cleaving host mRNA-decapping enzyme DCP1A to attenuate its antiviral activity. Functionally, plays a role in the initial induction of autophagosomes from host endoplasmic reticulum. Plays a role in the inhibition of host STAT3 signaling pathway by inducing the degradation of STAT3. In terms of biological role, responsible for replication and transcription of the viral RNA genome. Its function is as follows. Displays RNA and DNA duplex-unwinding activities with 5' to 3' polarity. Functionally, plays a role in viral transcription/replication and prevents the simultaneous activation of host cell dsRNA sensors, such as MDA5/IFIH1, OAS, PKR and NLRP3 inflammasome. Acts by degrading the 5'-polyuridines generated during replication of the poly(A) region of viral genomic and subgenomic RNAs. Catalyzes a two-step reaction in which a 2'3'-cyclic phosphate (2'3'-cP) is first generated by 2'-O transesterification, which is then hydrolyzed to a 3'-phosphate (3'-P). If not degraded, poly(U) RNA would hybridize with poly(A) RNA tails and activate host dsRNA sensors. Also plays a role in the inhibition of host type I interferon production by recruiting host OTULIN to promote removal of linear ubiquitination targeting host NEMO. The chain is Replicase polyprotein 1ab (rep) from Sus scrofa (Pig).